A 179-amino-acid chain; its full sequence is ATP synthase subunit b (179 aa).

Residues 26-46 (FLEANLFNLAILLGIIIYYAP) form a helical membrane-spanning segment.

Belongs to the ATPase B chain family. F-type ATPases have 2 components, F(1) - the catalytic core - and F(0) - the membrane proton channel. F(1) has five subunits: alpha(3), beta(3), gamma(1), delta(1), epsilon(1). F(0) has four main subunits: a(1), b(1), b'(1) and c(10-14). The alpha and beta chains form an alternating ring which encloses part of the gamma chain. F(1) is attached to F(0) by a central stalk formed by the gamma and epsilon chains, while a peripheral stalk is formed by the delta, b and b' chains.

It is found in the cellular thylakoid membrane. Its function is as follows. F(1)F(0) ATP synthase produces ATP from ADP in the presence of a proton or sodium gradient. F-type ATPases consist of two structural domains, F(1) containing the extramembraneous catalytic core and F(0) containing the membrane proton channel, linked together by a central stalk and a peripheral stalk. During catalysis, ATP synthesis in the catalytic domain of F(1) is coupled via a rotary mechanism of the central stalk subunits to proton translocation. Functionally, component of the F(0) channel, it forms part of the peripheral stalk, linking F(1) to F(0). This is ATP synthase subunit b from Synechocystis sp. (strain ATCC 27184 / PCC 6803 / Kazusa).